Reading from the N-terminus, the 37-residue chain is Large ribosomal subunit protein bL36 (37 aa).

The protein belongs to the bacterial ribosomal protein bL36 family.

This chain is Large ribosomal subunit protein bL36, found in Treponema denticola (strain ATCC 35405 / DSM 14222 / CIP 103919 / JCM 8153 / KCTC 15104).